Consider the following 202-residue polypeptide: MSRYRGPRVRIIRRLGALPGLTSKTPQLKSNSINQSASNKKISQYRIRLEEKQKLRFHYGITERQLLKYVRIARKAKGSTGQVLLQLLEMRLDNILFRLGMAPTIPGARQLVNHRHILVNDRIVNIPSYRCKPQDFITIKERQKSQGIIVKNMDLSQKYKIPNHLTFNSLEKKGLVNQILDRESIGLKINELLVVEYYSRQA.

The region spanning 90-165 (MRLDNILFRL…SQKYKIPNHL (76 aa)) is the S4 RNA-binding domain.

The protein belongs to the universal ribosomal protein uS4 family. Part of the 30S ribosomal subunit. Contacts protein S5. The interaction surface between S4 and S5 is involved in control of translational fidelity.

The protein localises to the plastid. It localises to the chloroplast. Functionally, one of the primary rRNA binding proteins, it binds directly to 16S rRNA where it nucleates assembly of the body of the 30S subunit. Its function is as follows. With S5 and S12 plays an important role in translational accuracy. The polypeptide is Small ribosomal subunit protein uS4c (rps4) (Diphyscium foliosum (Nut-moss)).